The following is a 105-amino-acid chain: Small ribosomal subunit protein uS10 (105 aa).

The protein belongs to the universal ribosomal protein uS10 family. As to quaternary structure, part of the 30S ribosomal subunit.

In terms of biological role, involved in the binding of tRNA to the ribosomes. The protein is Small ribosomal subunit protein uS10 of Nostoc punctiforme (strain ATCC 29133 / PCC 73102).